The primary structure comprises 55 residues: Variant surface glycoprotein ETAT 1.2 (55 aa).

Residue asparagine 34 is glycosylated (N-linked (GlcNAc...) asparagine). Asparagine 38 is lipidated: GPI-anchor amidated asparagine. Positions 39–55 (NSFAIKTSTLLLAVLLF) are cleaved as a propeptide — removed in mature form.

It localises to the cell membrane. In terms of biological role, VSG forms a coat on the surface of the parasite. The trypanosome evades the immune response of the host by expressing a series of antigenically distinct VSGs from an estimated 1000 VSG genes. This is Variant surface glycoprotein ETAT 1.2 from Trypanosoma brucei rhodesiense.